The primary structure comprises 149 residues: SsrA-binding protein (149 aa).

It belongs to the SmpB family.

The protein resides in the cytoplasm. Its function is as follows. Required for rescue of stalled ribosomes mediated by trans-translation. Binds to transfer-messenger RNA (tmRNA), required for stable association of tmRNA with ribosomes. tmRNA and SmpB together mimic tRNA shape, replacing the anticodon stem-loop with SmpB. tmRNA is encoded by the ssrA gene; the 2 termini fold to resemble tRNA(Ala) and it encodes a 'tag peptide', a short internal open reading frame. During trans-translation Ala-aminoacylated tmRNA acts like a tRNA, entering the A-site of stalled ribosomes, displacing the stalled mRNA. The ribosome then switches to translate the ORF on the tmRNA; the nascent peptide is terminated with the 'tag peptide' encoded by the tmRNA and targeted for degradation. The ribosome is freed to recommence translation, which seems to be the essential function of trans-translation. The chain is SsrA-binding protein from Wolbachia sp. subsp. Brugia malayi (strain TRS).